The chain runs to 317 residues: MKSDNHSFLGDSPKAFILLGVSDRPWLELPLFVVLLLSYVLAMLGNVAIILASRVDPQLHSPMYIFLSHLSFLDLCYTTTTVPQMLVNMGSSQKTISYGGCTVQYAVFHWLGCTECIVLAAMALDRYVAICKPLHYAVLMHRALCQQLVALAWLSGFGNSFVQVVLTVQLPFCGRQVLNNFFCEVPAVIKLSCADTAVNDTILAVLVAFFVLVPLALILLSYGFIARAVLRIQSSKGRHKAFGTCSSHLMIVSLFYLPAIYMYLQPPSSYSQEQGKFISLFYSIITPTLNPFTYTLRNKDMKGALRRLLARIWRLCG.

Residues 1 to 29 (MKSDNHSFLGDSPKAFILLGVSDRPWLEL) lie on the Extracellular side of the membrane. N-linked (GlcNAc...) asparagine glycosylation is present at Asn-5. The helical transmembrane segment at 30–53 (PLFVVLLLSYVLAMLGNVAIILAS) threads the bilayer. The Cytoplasmic segment spans residues 54-61 (RVDPQLHS). The chain crosses the membrane as a helical span at residues 62-83 (PMYIFLSHLSFLDLCYTTTTVP). Over 84 to 104 (QMLVNMGSSQKTISYGGCTVQ) the chain is Extracellular. A disulfide bond links Cys-101 and Cys-193. The chain crosses the membrane as a helical span at residues 105–124 (YAVFHWLGCTECIVLAAMAL). At 125–143 (DRYVAICKPLHYAVLMHRA) the chain is on the cytoplasmic side. Residues 144 to 162 (LCQQLVALAWLSGFGNSFV) form a helical membrane-spanning segment. Residues 163–199 (QVVLTVQLPFCGRQVLNNFFCEVPAVIKLSCADTAVN) lie on the Extracellular side of the membrane. Asn-199 carries N-linked (GlcNAc...) asparagine glycosylation. The chain crosses the membrane as a helical span at residues 200 to 223 (DTILAVLVAFFVLVPLALILLSYG). Residues 224 to 240 (FIARAVLRIQSSKGRHK) lie on the Cytoplasmic side of the membrane. A helical membrane pass occupies residues 241 to 263 (AFGTCSSHLMIVSLFYLPAIYMY). The Extracellular portion of the chain corresponds to 264–276 (LQPPSSYSQEQGK). Residues 277–296 (FISLFYSIITPTLNPFTYTL) traverse the membrane as a helical segment. The Cytoplasmic segment spans residues 297–317 (RNKDMKGALRRLLARIWRLCG).

Belongs to the G-protein coupled receptor 1 family.

It localises to the cell membrane. In terms of biological role, odorant receptor. The sequence is that of Olfactory receptor 2B11 (OR2B11) from Homo sapiens (Human).